The chain runs to 81 residues: MNREGAPGKSPEEMYIQQKVRVLLMLRKMGSNLTANEEEFLRTYAGVVNSQLSQLPQHSIDQGAEDVVMAFSRSETEDRRQ.

Ser59 is modified (phosphoserine).

Belongs to the CTNNBIP1 family. Binds CTNNB1.

The protein localises to the cytoplasm. It is found in the nucleus. Its function is as follows. Prevents the interaction between CTNNB1 and TCF family members, and acts as a negative regulator of the Wnt signaling pathway. The protein is Beta-catenin-interacting protein 1 (CTNNBIP1) of Bos taurus (Bovine).